Reading from the N-terminus, the 431-residue chain is Glucose-1-phosphate adenylyltransferase (431 aa).

K39 lines the beta-D-fructose 1,6-bisphosphate pocket. 3 residues coordinate AMP: R40, H46, and R52. Y114 is a binding site for alpha-D-glucose 1-phosphate. R130 provides a ligand contact to AMP. Residues G179, 194-195, and S212 each bind alpha-D-glucose 1-phosphate; that span reads EK. E370 and R386 together coordinate AMP. Beta-D-fructose 1,6-bisphosphate-binding positions include 419–423 and 429–431; these read REMLR and QER.

Belongs to the bacterial/plant glucose-1-phosphate adenylyltransferase family. As to quaternary structure, homotetramer.

It catalyses the reaction alpha-D-glucose 1-phosphate + ATP + H(+) = ADP-alpha-D-glucose + diphosphate. It participates in glycan biosynthesis; glycogen biosynthesis. Allosterically activated by fructose-1,6-bisphosphate (F16BP) and inhibited by AMP. In terms of biological role, involved in the biosynthesis of ADP-glucose, a building block required for the elongation reactions to produce glycogen. Catalyzes the reaction between ATP and alpha-D-glucose 1-phosphate (G1P) to produce pyrophosphate and ADP-Glc. The polypeptide is Glucose-1-phosphate adenylyltransferase (Salmonella paratyphi C (strain RKS4594)).